The sequence spans 448 residues: Ribosomal protein uS12 methylthiotransferase RimO (448 aa).

The MTTase N-terminal domain occupies 16-126; sequence PRISFVSLGC…VVAAVHEAVP (111 aa). The [4Fe-4S] cluster site is built by Cys-25, Cys-61, Cys-90, Cys-157, Cys-161, and Cys-164. Positions 143-380 constitute a Radical SAM core domain; it reads LTPRHYAYLK…MEAQSHVSLR (238 aa). Residues 383–448 form the TRAM domain; it reads RAKVGKRLSV…DAYDLHGIAV (66 aa).

This sequence belongs to the methylthiotransferase family. RimO subfamily. The cofactor is [4Fe-4S] cluster.

Its subcellular location is the cytoplasm. It carries out the reaction L-aspartate(89)-[ribosomal protein uS12]-hydrogen + (sulfur carrier)-SH + AH2 + 2 S-adenosyl-L-methionine = 3-methylsulfanyl-L-aspartate(89)-[ribosomal protein uS12]-hydrogen + (sulfur carrier)-H + 5'-deoxyadenosine + L-methionine + A + S-adenosyl-L-homocysteine + 2 H(+). Functionally, catalyzes the methylthiolation of an aspartic acid residue of ribosomal protein uS12. The chain is Ribosomal protein uS12 methylthiotransferase RimO from Methylorubrum extorquens (strain PA1) (Methylobacterium extorquens).